We begin with the raw amino-acid sequence, 173 residues long: RTX-III toxin-activating lysine-acyltransferase ApxIIC (173 aa).

Catalysis depends on residues histidine 29 and aspartate 98.

This sequence belongs to the RTX toxin acyltransferase family. Homodimer.

It localises to the cytoplasm. It catalyses the reaction a fatty acyl-[ACP] + L-lysyl-[protein] = N(6)-(fatty acyl)-L-lysyl-[protein] + holo-[ACP] + H(+). Protein-lysine acyltransferase that catalyzes fatty acylation of the protoxin, thereby converting it to the active toxin. This chain is RTX-III toxin-activating lysine-acyltransferase ApxIIC (apxIIIC), found in Actinobacillus pleuropneumoniae (Haemophilus pleuropneumoniae).